Here is a 216-residue protein sequence, read N- to C-terminus: Large ribosomal subunit protein uL1A (216 aa).

Ser85 and Ser128 each carry phosphoserine.

The protein belongs to the universal ribosomal protein uL1 family. As to quaternary structure, component of the large ribosomal subunit (LSU). Mature yeast ribosomes consist of a small (40S) and a large (60S) subunit. The 40S small subunit contains 1 molecule of ribosomal RNA (18S rRNA) and at least 33 different proteins. The large 60S subunit contains 3 rRNA molecules (25S, 5.8S and 5S rRNA) and at least 46 different proteins. uL1 forms part of the L1 stalk.

Its subcellular location is the cytoplasm. Component of the ribosome, a large ribonucleoprotein complex responsible for the synthesis of proteins in the cell. The small ribosomal subunit (SSU) binds messenger RNAs (mRNAs) and translates the encoded message by selecting cognate aminoacyl-transfer RNA (tRNA) molecules. The large subunit (LSU) contains the ribosomal catalytic site termed the peptidyl transferase center (PTC), which catalyzes the formation of peptide bonds, thereby polymerizing the amino acids delivered by tRNAs into a polypeptide chain. The nascent polypeptides leave the ribosome through a tunnel in the LSU and interact with protein factors that function in enzymatic processing, targeting, and the membrane insertion of nascent chains at the exit of the ribosomal tunnel. uL1 forms part of the L1 stalk, a mobile element that plays a role in evacuating the exit-site tRNA. The polypeptide is Large ribosomal subunit protein uL1A (rpl102) (Schizosaccharomyces pombe (strain 972 / ATCC 24843) (Fission yeast)).